Consider the following 179-residue polypeptide: MAVFKTTLWRLISGTLGIICLSLMSTLGILLKNSFTKLSIEPAFTPGPNIELQKDSDCCSCQEKWVGYRCNCYFISSEQKTWNESRHLCASQKSSLLQLQNTDELDFMSSSQQFYWIGLSYSEEHTAWLWENGSALSQYLFPSFETFNTKNCIAYNPNGNALDESCEDKNRYICKQQLI.

Residues 1–10 are Cytoplasmic-facing; the sequence is MAVFKTTLWR. A helical; Signal-anchor for type II membrane protein membrane pass occupies residues 11–31; the sequence is LISGTLGIICLSLMSTLGILL. At 32-179 the chain is on the extracellular side; the sequence is KNSFTKLSIE…NRYICKQQLI (148 aa). Cystine bridges form between C58–C70 and C61–C72. Positions 68-175 constitute a C-type lectin domain; the sequence is YRCNCYFISS…CEDKNRYICK (108 aa). Residues N83 and N132 are each glycosylated (N-linked (GlcNAc...) asparagine). 2 disulfides stabilise this stretch: C89-C174 and C152-C166.

In terms of assembly, can form disulfide-bonded heterodimer with NKG2 family members KLRC1 and KLRC2. KLRD1-KLRC1 heterodimer interacts with peptide-bound HLA-E-B2M heterotrimeric complex. KLRD1 plays a prominent role in directly interacting with HLA-E. KLRD1-KLRC1 interacts with much higher affinity with peptide-bound HLA-E-B2M than KLRD1-KLRC2. Interacts with the adapter protein TYROBP/DAP12; this interaction is required for cell surface expression and cell activation. In terms of tissue distribution, expressed in NK cell subsets (at protein level). Expressed in memory/effector CD8-positive alpha-beta T cell subsets (at protein level). Expressed in melanoma-specific cytotoxic T cell clones (at protein level). Expressed in terminally differentiated cytotoxic gamma-delta T cells (at protein level). KLRD1-KLRC1 and KLRD1-KLRC2 are differentially expressed in NK and T cell populations, with only minor subsets expressing both receptor complexes (at protein level).

The protein resides in the cell membrane. Its function is as follows. Immune receptor involved in self-nonself discrimination. In complex with KLRC1 or KLRC2 on cytotoxic and regulatory lymphocyte subsets, recognizes non-classical major histocompatibility (MHC) class Ib molecule HLA-E loaded with self-peptides derived from the signal sequence of classical MHC class Ia and non-classical MHC class Ib molecules. Enables cytotoxic cells to monitor the expression of MHC class I molecules in healthy cells and to tolerate self. Primarily functions as a ligand binding subunit as it lacks the capacity to signal. In terms of biological role, KLRD1-KLRC1 acts as an immune inhibitory receptor. Key inhibitory receptor on natural killer (NK) cells that regulates their activation and effector functions. Dominantly counteracts T cell receptor signaling on a subset of memory/effector CD8-positive T cells as part of an antigen-driven response to avoid autoimmunity. On intraepithelial CD8-positive gamma-delta regulatory T cells triggers TGFB1 secretion, which in turn limits the cytotoxic programming of intraepithelial CD8-positive alpha-beta T cells, distinguishing harmless from pathogenic antigens. In HLA-E-rich tumor microenvironment, acts as an immune inhibitory checkpoint and may contribute to progressive loss of effector functions of NK cells and tumor-specific T cells, a state known as cell exhaustion. Upon HLA-E-peptide binding, transmits intracellular signals through KLRC1 immunoreceptor tyrosine-based inhibition motifs (ITIMs) by recruiting INPP5D/SHIP-1 and INPPL1/SHIP-2 tyrosine phosphatases to ITIMs, and ultimately opposing signals transmitted by activating receptors through dephosphorylation of proximal signaling molecules. Functionally, KLRD1-KLRC2 acts as an immune activating receptor. On cytotoxic lymphocyte subsets recognizes HLA-E loaded with signal sequence-derived peptides from non-classical MHC class Ib HLA-G molecules, likely playing a role in the generation and effector functions of adaptive NK cells and in maternal-fetal tolerance during pregnancy. Regulates the effector functions of terminally differentiated cytotoxic lymphocyte subsets, and in particular may play a role in adaptive NK cell response to viral infection. Upon HLA-E-peptide binding, transmits intracellular signals via the adapter protein TYROBP/DAP12, triggering the phosphorylation of proximal signaling molecules and cell activation. (Microbial infection) Viruses like human cytomegalovirus have evolved an escape mechanism whereby virus-induced down-regulation of host MHC class I molecules is coupled to the binding of viral peptides to HLA-E, restoring HLA-E expression and inducing HLA-E-dependent NK cell immune tolerance to infected cells. Recognizes HLA-E in complex with human cytomegalovirus UL40-derived peptide (VMAPRTLIL) and inhibits NK cell cytotoxicity. Its function is as follows. (Microbial infection) May recognize HLA-E in complex with HIV-1 gag/Capsid protein p24-derived peptide (AISPRTLNA) on infected cells and may inhibit NK cell cytotoxicity, a mechanism that allows HIV-1 to escape immune recognition. In terms of biological role, (Microbial infection) Upon SARS-CoV-2 infection, may contribute to functional exhaustion of cytotoxic NK cells and CD8-positive T cells. On NK cells, may recognize HLA-E in complex with SARS-CoV-2 S/Spike protein S1-derived peptide (LQPRTFLL) expressed on the surface of lung epithelial cells, inducing NK cell exhaustion and dampening antiviral immune surveillance. This is Natural killer cells antigen CD94 (KLRD1) from Homo sapiens (Human).